We begin with the raw amino-acid sequence, 446 residues long: MATATQIFLSPDHAGIARVSECPVGAIEAANHLLQTNHDEHHMFWRPVAGHNHLTHSVLTILALGGGPAELQRAFDDARDIQRPIPPVDRQVVEQLGDPEQFRSRIGQLDQYSNFLAFFSQEIATKGYRAVVDEHCFSGSRNAETLFAQLYEGLYHPVIHLAFGIEFEQPSIVAEALAQVASHDSMGIEAFLMDCEAEATQSAHSGRTLVQLFRDAEADEALRHAAEGFDDGPARVRDGVLGRTARAITALAAQFRVDPQDIEHRLAEMINCSAFITGAVQRTGKPRKIDFFHLHTVTASLSIDILVRQPWISPVVKARLVEWKARVDLVWYTATGAVQLHLPSLLNYMPTSSAGMDWAALYRAVAAVHDDGHLAKLVRALKSGEAVSNPFEKGAGETFPIQGIAWLKLAQMAYDTTVDRPIEQKWIWGIGFDENWTHVLSLESEK.

This sequence belongs to the questin oxidase family.

The catalysed reaction is questin + NADPH + O2 = demethylsulochrin + NADP(+). It functions in the pathway secondary metabolite biosynthesis. Questin oxidase; part of the gene cluster that mediates the biosynthesis of geodin, an intermediate in the biosynthesis of other natural products. The pathway begins with the synthesis of atrochrysone thioester by the polyketide synthase (PKS) gedC. The atrochrysone carboxyl ACP thioesterase gedB then breaks the thioester bond and releases the atrochrysone carboxylic acid from gedC. The atrochrysone carboxylic acid is then converted to atrochrysone which is further transformed into emodinanthrone. The next step is performed by the emodinanthrone oxygenase gedH that catalyzes the oxidation of emodinanthrone to emodin. Emodin O-methyltransferase encoded probably by gedA then catalyzes methylation of the 8-hydroxy group of emodin to form questin. Ring cleavage of questin by questin oxidase gedK leads to desmethylsulochrin via several intermediates including questin epoxide. Another methylation step probably catalyzed by methyltransferase gedG leads to the formation of sulochrin which is further converted to dihydrogeodin by the sulochrin halogenase gedL. Finally, the dihydrogeodin oxidase gedJ catalyzes the stereospecific phenol oxidative coupling reaction converting dihydrogeodin to geodin. This Aspergillus terreus (strain NIH 2624 / FGSC A1156) protein is Questin oxidase.